A 191-amino-acid chain; its full sequence is Fe/S biogenesis protein NfuA (191 aa).

[4Fe-4S] cluster-binding residues include C149 and C152.

Belongs to the NfuA family. Homodimer. It depends on [4Fe-4S] cluster as a cofactor.

Functionally, involved in iron-sulfur cluster biogenesis. Binds a 4Fe-4S cluster, can transfer this cluster to apoproteins, and thereby intervenes in the maturation of Fe/S proteins. Could also act as a scaffold/chaperone for damaged Fe/S proteins. The polypeptide is Fe/S biogenesis protein NfuA (Salmonella choleraesuis (strain SC-B67)).